The following is a 25-amino-acid chain: Chrysophsin-2 (25 aa).

H25 carries the post-translational modification Histidine amide.

As to expression, gill.

It is found in the secreted. Functionally, has antibacterial activity against Gram-positive bacteria B.subtilis ATCC 6633, L.garvieae ATCC 49156 and S.iniae F-8502, and Gram-negative bacteria E.coli WT-2, V.anguillarum ATCC 19264, V.penaeicida KHA, V.harveyi ATCC 14126, V.vulnificus ATCC 33148 and A.salmonicida NCMB 1102. Has hemolytic activity against human red blood cells. Seems to disrupt the membranes by adopting an alpha helical conformation. May play a significant role in innate host defense. The sequence is that of Chrysophsin-2 from Pagrus major (Red sea bream).